We begin with the raw amino-acid sequence, 244 residues long: Aspartate/glutamate leucyltransferase (244 aa).

This sequence belongs to the R-transferase family. Bpt subfamily.

The protein localises to the cytoplasm. The catalysed reaction is N-terminal L-glutamyl-[protein] + L-leucyl-tRNA(Leu) = N-terminal L-leucyl-L-glutamyl-[protein] + tRNA(Leu) + H(+). It carries out the reaction N-terminal L-aspartyl-[protein] + L-leucyl-tRNA(Leu) = N-terminal L-leucyl-L-aspartyl-[protein] + tRNA(Leu) + H(+). Functionally, functions in the N-end rule pathway of protein degradation where it conjugates Leu from its aminoacyl-tRNA to the N-termini of proteins containing an N-terminal aspartate or glutamate. This chain is Aspartate/glutamate leucyltransferase, found in Bordetella parapertussis (strain 12822 / ATCC BAA-587 / NCTC 13253).